Here is a 202-residue protein sequence, read N- to C-terminus: Alpha-latrotoxin-Lm1a (202 aa).

ANK repeat units lie at residues 95 to 109, 110 to 120, 122 to 132, 133 to 138, 142 to 161, 163 to 170, 171 to 182, Lys-184, 185 to 191, and 193 to 202; these read LYNAASNPDSAVGFK, LMESPEININE, NDWPVASTLLR, SSNVNV, NSDTPLNLAYFIDQGADINT, NGHLNIVK, YLVEEEDLSVDG, YGIDMTI, and TALDIATDLK. The interval 175–181 is 4C4.1 epitope; it reads EEDLSVD.

This sequence belongs to the cationic peptide 01 (latrotoxin) family. 03 (alpha-latrotoxin) subfamily. Homotetramer in membranes. In terms of processing, processed by furin-like proteases at both the N- and C-termini. Post-translationally, contains 1 disulfide bond. As to expression, expressed in venom gland, cephalothorax, and abdomen tissues from both males and females.

It is found in the secreted. It localises to the target cell membrane. Presynaptic neurotoxin that causes massive release of neurotransmitters from vertebrate (but not invertebrate) nerve terminals and endocrine cells via a complex mechanism involving activation of receptor(s) and toxin insertion into the plasma membrane with subsequent pore formation. Binds to neurexin-1-alpha (NRXN1) in a calcium dependent manner, adhesion G protein-coupled receptor L1 (ADGRL1, also termed latrophilin-1 and calcium-independent receptor of latrotoxin (CIRL)), and receptor-type tyrosine-protein phosphatase S (PTPRS), also termed PTP sigma. NRXN1 and PTPRS are suggested to provide a platform for binding and subsequent pore formation events. In contrast, binding to ADGRL1 does not involve oligomerization and channel formation, but direct downstream stimulation of the synaptic fusion machinery. The sequence is that of Alpha-latrotoxin-Lm1a from Latrodectus mactans (Black widow spider).